The following is a 350-amino-acid chain: S-adenosylmethionine:tRNA ribosyltransferase-isomerase (350 aa).

This sequence belongs to the QueA family. As to quaternary structure, monomer.

Its subcellular location is the cytoplasm. It carries out the reaction 7-aminomethyl-7-carbaguanosine(34) in tRNA + S-adenosyl-L-methionine = epoxyqueuosine(34) in tRNA + adenine + L-methionine + 2 H(+). It functions in the pathway tRNA modification; tRNA-queuosine biosynthesis. In terms of biological role, transfers and isomerizes the ribose moiety from AdoMet to the 7-aminomethyl group of 7-deazaguanine (preQ1-tRNA) to give epoxyqueuosine (oQ-tRNA). This Vibrio vulnificus (strain YJ016) protein is S-adenosylmethionine:tRNA ribosyltransferase-isomerase.